The primary structure comprises 194 residues: Imidazoleglycerol-phosphate dehydratase (194 aa).

The protein belongs to the imidazoleglycerol-phosphate dehydratase family.

The protein resides in the cytoplasm. It carries out the reaction D-erythro-1-(imidazol-4-yl)glycerol 3-phosphate = 3-(imidazol-4-yl)-2-oxopropyl phosphate + H2O. Its pathway is amino-acid biosynthesis; L-histidine biosynthesis; L-histidine from 5-phospho-alpha-D-ribose 1-diphosphate: step 6/9. The protein is Imidazoleglycerol-phosphate dehydratase of Caldanaerobacter subterraneus subsp. tengcongensis (strain DSM 15242 / JCM 11007 / NBRC 100824 / MB4) (Thermoanaerobacter tengcongensis).